Here is an 86-residue protein sequence, read N- to C-terminus: MNKDAMSKEEKKVTDRINELYHKKENEGLTPEEEEERKELHKKFLANFRAAFKQDVENMVILDKNGKEVTSEKAKQAQRKKGLRKD.

2 stretches are compositionally biased toward basic and acidic residues: residues 1–27 (MNKDAMSKEEKKVTDRINELYHKKENE) and 65–75 (NGKEVTSEKAK). 2 disordered regions span residues 1-36 (MNKDAMSKEEKKVTDRINELYHKKENEGLTPEEEEE) and 65-86 (NGKEVTSEKAKQAQRKKGLRKD). Residues 76-86 (QAQRKKGLRKD) show a composition bias toward basic residues.

It belongs to the UPF0291 family.

The protein resides in the cytoplasm. The polypeptide is UPF0291 protein LBA1279 (Lactobacillus acidophilus (strain ATCC 700396 / NCK56 / N2 / NCFM)).